The chain runs to 430 residues: WD repeat-containing protein jip5 (430 aa).

WD repeat units follow at residues P9–E48, R72–K111, T117–S158, D215–E262, A272–E318, and D323–E360. Residues E356–D374 show a composition bias toward acidic residues. Positions E356–E430 are disordered. Positions H382–S397 are enriched in basic and acidic residues. Positions R405–K416 are enriched in basic residues.

It belongs to the WD repeat WDR55 family.

It localises to the nucleus. It is found in the nucleolus. In Botryotinia fuckeliana (strain B05.10) (Noble rot fungus), this protein is WD repeat-containing protein jip5 (jip5).